The primary structure comprises 718 residues: Polyribonucleotide nucleotidyltransferase (718 aa).

Mg(2+) contacts are provided by Asp491 and Asp497. Residues 558–617 (PRMLTIKINPEKIRDVIGKGGATIRALTEETGTQIDISDDGTIVIASVDEGQAKEAQRRI) enclose the KH domain. Residues 627 to 695 (GQVYDGSVLR…EKGRLRLSVK (69 aa)) form the S1 motif domain.

This sequence belongs to the polyribonucleotide nucleotidyltransferase family. Mg(2+) is required as a cofactor.

The protein resides in the cytoplasm. The catalysed reaction is RNA(n+1) + phosphate = RNA(n) + a ribonucleoside 5'-diphosphate. Involved in mRNA degradation. Catalyzes the phosphorolysis of single-stranded polyribonucleotides processively in the 3'- to 5'-direction. The sequence is that of Polyribonucleotide nucleotidyltransferase from Bordetella avium (strain 197N).